Reading from the N-terminus, the 313-residue chain is Putative S-adenosyl-L-methionine-dependent methyltransferase MAP_3563 (313 aa).

Residues aspartate 139 and 168–169 (DL) contribute to the S-adenosyl-L-methionine site.

The protein belongs to the UPF0677 family.

Exhibits S-adenosyl-L-methionine-dependent methyltransferase activity. The polypeptide is Putative S-adenosyl-L-methionine-dependent methyltransferase MAP_3563 (Mycolicibacterium paratuberculosis (strain ATCC BAA-968 / K-10) (Mycobacterium paratuberculosis)).